The chain runs to 150 residues: Large ribosomal subunit protein bL9 (150 aa).

It belongs to the bacterial ribosomal protein bL9 family.

Its function is as follows. Binds to the 23S rRNA. In Yersinia pseudotuberculosis serotype I (strain IP32953), this protein is Large ribosomal subunit protein bL9.